We begin with the raw amino-acid sequence, 360 residues long: Alanine racemase (360 aa).

The active-site Proton acceptor; specific for D-alanine is Lys-33. An N6-(pyridoxal phosphate)lysine modification is found at Lys-33. Arg-129 serves as a coordination point for substrate. The active-site Proton acceptor; specific for L-alanine is the Tyr-253. A substrate-binding site is contributed by Met-301.

The protein belongs to the alanine racemase family. The cofactor is pyridoxal 5'-phosphate.

The catalysed reaction is L-alanine = D-alanine. It functions in the pathway amino-acid biosynthesis; D-alanine biosynthesis; D-alanine from L-alanine: step 1/1. Its function is as follows. Catalyzes the interconversion of L-alanine and D-alanine. May also act on other amino acids. This Xanthomonas campestris pv. campestris (strain 8004) protein is Alanine racemase (alr).